Reading from the N-terminus, the 158-residue chain is SUMO-conjugating enzyme UBC9 (158 aa).

The UBC core domain maps to 4-157; the sequence is IALSRLAQER…VRAQAKKFAP (154 aa). The segment at 13–18 is interaction with SUMO1; sequence RKAWRK. Cys93 (glycyl thioester intermediate) is an active-site residue.

It belongs to the ubiquitin-conjugating enzyme family. As to quaternary structure, interacts with SOX9.

It is found in the nucleus. It localises to the cytoplasm. Its pathway is protein modification; protein sumoylation. In terms of biological role, accepts the ubiquitin-like proteins SUMO1, SUMO2 and SUMO3 from the UBLE1A-UBLE1B E1 complex and catalyzes their covalent attachment to other proteins with the help of an E3 ligase such as RANBP2 or CBX4. Essential for nuclear architecture and chromosome segregation. This Gallus gallus (Chicken) protein is SUMO-conjugating enzyme UBC9 (UBE2I).